A 237-amino-acid chain; its full sequence is Probable 2-phosphosulfolactate phosphatase (237 aa).

This sequence belongs to the ComB family. It depends on Mg(2+) as a cofactor.

The catalysed reaction is (2R)-O-phospho-3-sulfolactate + H2O = (2R)-3-sulfolactate + phosphate. This is Probable 2-phosphosulfolactate phosphatase from Thermus thermophilus (strain ATCC 27634 / DSM 579 / HB8).